Reading from the N-terminus, the 383-residue chain is GA-binding protein subunit beta-1 (383 aa).

Ser-2 bears the N-acetylserine mark. ANK repeat units follow at residues 5–34 (DLGK…PFTT) and 37–66 (LGTS…SRDA). An N6-acetyllysine modification is found at Lys-69. ANK repeat units follow at residues 70 to 99 (VDRT…DVNA), 103 to 132 (LKMT…DVHT), and 136 to 166 (FCKT…QINT). Residues Lys-340 and Lys-369 each carry the N6-acetyllysine modification.

Heterotetramer of two alpha and two beta subunits. Interacts with HCFC1, causing repression of transcriptional activity. In terms of processing, acetylated by EP300/p300. Deacetylated by SIRT7, promoting heterotetramerization and activity.

The protein localises to the nucleus. Its function is as follows. Transcription factor capable of interacting with purine rich repeats (GA repeats). Acts as a master regulator of nuclear-encoded mitochondrial genes. This chain is GA-binding protein subunit beta-1 (GABPB1), found in Bos taurus (Bovine).